Reading from the N-terminus, the 186-residue chain is ADP-ribosylation factor-like protein alp41 (186 aa).

A lipid anchor (N-myristoyl glycine) is attached at Gly-2. GTP contacts are provided by residues 23-30, 66-70, and 125-128; these read GLDNAGKT, DIGGQ, and NKSD.

It belongs to the small GTPase superfamily. Arf family.

It is found in the cytoplasm. Its subcellular location is the cytoskeleton. Its function is as follows. Has a role in the cofactor-dependent pathway of microtubule biogenesis. Required for growth polarity control. In Schizosaccharomyces pombe (strain 972 / ATCC 24843) (Fission yeast), this protein is ADP-ribosylation factor-like protein alp41 (alp41).